The primary structure comprises 350 residues: GTPase Obg (350 aa).

Positions 1–175 (MFVDNIRIFA…GVFFMELRRI (175 aa)) constitute an Obg domain. The OBG-type G domain maps to 176–345 (ADAGLVGYPN…LRNRLDELVG (170 aa)). Residues 182–189 (GYPNAGKS), 207–211 (FTTLQ), 229–232 (DIPG), 299–302 (NKMD), and 326–328 (SAL) each bind GTP. Mg(2+)-binding residues include Ser-189 and Thr-209.

It belongs to the TRAFAC class OBG-HflX-like GTPase superfamily. OBG GTPase family. As to quaternary structure, monomer. The cofactor is Mg(2+).

It is found in the cytoplasm. Its function is as follows. An essential GTPase which binds GTP, GDP and possibly (p)ppGpp with moderate affinity, with high nucleotide exchange rates and a fairly low GTP hydrolysis rate. Plays a role in control of the cell cycle, stress response, ribosome biogenesis and in those bacteria that undergo differentiation, in morphogenesis control. This Akkermansia muciniphila (strain ATCC BAA-835 / DSM 22959 / JCM 33894 / BCRC 81048 / CCUG 64013 / CIP 107961 / Muc) protein is GTPase Obg.